The chain runs to 505 residues: Exodeoxyribonuclease 7 large subunit (505 aa).

Residues 466–505 form a disordered region; the sequence is SGDRDAVIDGEGGPAPAPTAPAPKPRPKPAAPPAGQGDLF. The span at 480–497 shows a compositional bias: pro residues; that stretch reads APAPTAPAPKPRPKPAAP.

The protein belongs to the XseA family. In terms of assembly, heterooligomer composed of large and small subunits.

Its subcellular location is the cytoplasm. The catalysed reaction is Exonucleolytic cleavage in either 5'- to 3'- or 3'- to 5'-direction to yield nucleoside 5'-phosphates.. Bidirectionally degrades single-stranded DNA into large acid-insoluble oligonucleotides, which are then degraded further into small acid-soluble oligonucleotides. In Caulobacter vibrioides (strain NA1000 / CB15N) (Caulobacter crescentus), this protein is Exodeoxyribonuclease 7 large subunit.